A 291-amino-acid chain; its full sequence is 33 kDa chaperonin (291 aa).

2 disulfide bridges follow: Cys229–Cys231 and Cys262–Cys265.

This sequence belongs to the HSP33 family. Post-translationally, under oxidizing conditions two disulfide bonds are formed involving the reactive cysteines. Under reducing conditions zinc is bound to the reactive cysteines and the protein is inactive.

Its subcellular location is the cytoplasm. Redox regulated molecular chaperone. Protects both thermally unfolding and oxidatively damaged proteins from irreversible aggregation. Plays an important role in the bacterial defense system toward oxidative stress. The chain is 33 kDa chaperonin from Aliivibrio salmonicida (strain LFI1238) (Vibrio salmonicida (strain LFI1238)).